A 133-amino-acid polypeptide reads, in one-letter code: Profilin-3 (133 aa).

The protein belongs to the profilin family. In terms of assembly, occurs in many kinds of cells as a complex with monomeric actin in a 1:1 ratio.

The protein localises to the cytoplasm. It is found in the cytoskeleton. In terms of biological role, binds to actin and affects the structure of the cytoskeleton. At high concentrations, profilin prevents the polymerization of actin, whereas it enhances it at low concentrations. By binding to PIP2, it inhibits the formation of IP3 and DG. In Nicotiana tabacum (Common tobacco), this protein is Profilin-3 (PRO3).